The sequence spans 70 residues: DNA-directed RNA polymerase subunit omega (70 aa).

Belongs to the RNA polymerase subunit omega family. The RNAP catalytic core consists of 2 alpha, 1 beta, 1 beta' and 1 omega subunit. When a sigma factor is associated with the core the holoenzyme is formed, which can initiate transcription.

It catalyses the reaction RNA(n) + a ribonucleoside 5'-triphosphate = RNA(n+1) + diphosphate. Functionally, promotes RNA polymerase assembly. Latches the N- and C-terminal regions of the beta' subunit thereby facilitating its interaction with the beta and alpha subunits. The sequence is that of DNA-directed RNA polymerase subunit omega from Nitratiruptor sp. (strain SB155-2).